The following is a 76-amino-acid chain: Dermaseptin-SP2 (76 aa).

Positions 1-22 (MAFLKKSLFLVLFLGLVSLSIC) are cleaved as a signal peptide. Positions 23–45 (EEEKRENEDEEEQEDEEQSEEKR) are excised as a propeptide. The segment at 24–44 (EEKRENEDEEEQEDEEQSEEK) is disordered. A compositionally biased stretch (acidic residues) spans 30 to 41 (EDEEEQEDEEQS). Position 73 is a glutamine amide (Gln73). The propeptide occupies 74-76 (GEQ).

In terms of tissue distribution, expressed by the skin glands.

The protein resides in the secreted. The protein localises to the target cell membrane. Antimicrobial peptide with activity against Gram-positive and Gram-negative bacteria and fungi. Has been tested against E.coli (MIC=2.68-8 uM), S.aureus (ATCC 25923, MIC=2.68-8 uM), S.aureus (ATCC oxacillin resistant, MIC=2.68 uM), K.pneumoniae (MIC=10.71 uM) and C.albicans (MIC=10.71-32 uM). Probably acts by disturbing membrane functions with its alpha-helical amphipathic structure. May penetrate bacterial membranes, but stay at the mammalian membrane surface. Shows a very weak hemolytic activity. The polypeptide is Dermaseptin-SP2 (Agalychnis spurrelli (Gliding leaf frog)).